The sequence spans 224 residues: MIKLVAIDVDGTLTDKDRLISTRAIEFIRKAEKKGIIVSLLSGNVIPVVYALKVFIGINGPVFGENGGVMFDNDGSITKFFSNEKTNSFLDEMSKKTSMRSIFTNKWREASTGFDIDGKDVDYVKAEAEKRGLVVFYSGYSWHLMNKGEDKGFAVKILKEKYGLNYEEILVVGDSNNDMPMFELPVFKACPANATDNVKKASDFVSSYSYGEEIGEVFSHFNLL.

Asp-8 serves as the catalytic Nucleophile. Asp-8 and Asp-10 together coordinate Mg(2+). Lys-151 contacts substrate. The Mg(2+) site is built by Asp-174 and Asp-178.

The protein belongs to the archaeal SPP-like hydrolase family. Requires Mg(2+) as cofactor.

The enzyme catalyses 2-phosphoglycolate + H2O = glycolate + phosphate. In terms of biological role, catalyzes the dephosphorylation of 2-phosphoglycolate. This is Phosphoglycolate phosphatase from Thermoplasma volcanium (strain ATCC 51530 / DSM 4299 / JCM 9571 / NBRC 15438 / GSS1).